The sequence spans 98 residues: NADH-ubiquinone oxidoreductase chain 4L (98 aa).

3 helical membrane passes run 1–21 (MNLI…GLIF), 26–46 (IINI…LFVL), and 61–81 (LYIL…VVIL).

This sequence belongs to the complex I subunit 4L family.

The protein resides in the mitochondrion membrane. It catalyses the reaction a ubiquinone + NADH + 5 H(+)(in) = a ubiquinol + NAD(+) + 4 H(+)(out). Functionally, core subunit of the mitochondrial membrane respiratory chain NADH dehydrogenase (Complex I) that is believed to belong to the minimal assembly required for catalysis. Complex I functions in the transfer of electrons from NADH to the respiratory chain. The immediate electron acceptor for the enzyme is believed to be ubiquinone. In Dictyostelium discoideum (Social amoeba), this protein is NADH-ubiquinone oxidoreductase chain 4L (nad4L).